A 202-amino-acid polypeptide reads, in one-letter code: UPF0126 membrane protein YvgT (202 aa).

The next 6 helical transmembrane spans lie at 3–23 (WELL…IVAM), 26–46 (EYDI…GGAI), 63–83 (AYFQ…KLLL), 90–110 (GNLS…LYAV), 113–133 (GHPL…GGII), and 160–180 (IVGL…FVLV).

Belongs to the UPF0126 family.

It localises to the cell membrane. This is UPF0126 membrane protein YvgT (yvgT) from Bacillus subtilis (strain 168).